A 558-amino-acid polypeptide reads, in one-letter code: Kelch-like protein 23 (558 aa).

Residues 36 to 104 (TDITLQCPSG…AYTSQIEITK (69 aa)) form the BTB domain. Positions 139 to 240 (CIGMHSFAEF…DPVYLKTALG (102 aa)) constitute a BACK domain. Kelch repeat units lie at residues 274–320 (TMYI…CLGP), 321–369 (NIYV…TLGG), 370–416 (CVYA…VLHE), 418–466 (IYVI…PFEN), 467–508 (KLYL…IMNG), and 510–557 (IYVT…CVYN).

The sequence is that of Kelch-like protein 23 (Klhl23) from Mus musculus (Mouse).